We begin with the raw amino-acid sequence, 765 residues long: Eukaryotic translation initiation factor 3 subunit B (765 aa).

The segment at 1–136 is sufficient for interaction with HCR1 and TIF32; the sequence is MKNFLPRTLK…LFVECGSMND (136 aa). The interval 28 to 261 is sufficient for interaction with PIC8; the sequence is RNTQLKRSKI…GVTAWGGPNF (234 aa). The residue at position 61 (Ser61) is a Phosphoserine. The residue at position 67 (Tyr67) is a Phosphotyrosine. One can recognise an RRM domain in the interval 77–162; the sequence is QYIVVNGAPV…HRLFLYTMKD (86 aa). Ser671 bears the Phosphoserine mark.

It belongs to the eIF-3 subunit B family. In terms of assembly, component of the eukaryotic translation initiation factor 3 (eIF-3) complex.

The protein localises to the cytoplasm. In terms of biological role, RNA-binding component of the eukaryotic translation initiation factor 3 (eIF-3) complex, which is involved in protein synthesis of a specialized repertoire of mRNAs and, together with other initiation factors, stimulates binding of mRNA and methionyl-tRNAi to the 40S ribosome. The eIF-3 complex specifically targets and initiates translation of a subset of mRNAs involved in cell proliferation. The polypeptide is Eukaryotic translation initiation factor 3 subunit B (Saccharomyces cerevisiae (strain YJM789) (Baker's yeast)).